The sequence spans 391 residues: Acridone synthase 2 (391 aa).

C164 is an active-site residue.

Belongs to the thiolase-like superfamily. Chalcone/stilbene synthases family. Homodimer.

The enzyme catalyses N-methylanthraniloyl-CoA + 3 malonyl-CoA + 3 H(+) = 1,3-dihydroxy-N-methylacridone + 3 CO2 + 4 CoA + H2O. This chain is Acridone synthase 2 (ACS2), found in Ruta graveolens (Common rue).